Here is a 340-residue protein sequence, read N- to C-terminus: Ketol-acid reductoisomerase (NADP(+)) (340 aa).

In terms of domain architecture, KARI N-terminal Rossmann spans 1 to 183; the sequence is MAITVYYDKD…GGGRTGIIET (183 aa). NADP(+)-binding positions include 26–29, Arg49, Ser52, Ser54, and 84–87; these read FGSQ and DEIQ. His109 is a catalytic residue. Gly135 lines the NADP(+) pocket. The KARI C-terminal knotted domain occupies 184 to 329; sequence TFKAETETDL…RNLRAMMPWI (146 aa). Residues Asp192, Glu196, Glu228, and Glu232 each contribute to the Mg(2+) site. Position 253 (Ser253) interacts with substrate.

This sequence belongs to the ketol-acid reductoisomerase family. Mg(2+) is required as a cofactor.

The catalysed reaction is (2R)-2,3-dihydroxy-3-methylbutanoate + NADP(+) = (2S)-2-acetolactate + NADPH + H(+). It catalyses the reaction (2R,3R)-2,3-dihydroxy-3-methylpentanoate + NADP(+) = (S)-2-ethyl-2-hydroxy-3-oxobutanoate + NADPH + H(+). Its pathway is amino-acid biosynthesis; L-isoleucine biosynthesis; L-isoleucine from 2-oxobutanoate: step 2/4. It functions in the pathway amino-acid biosynthesis; L-valine biosynthesis; L-valine from pyruvate: step 2/4. Involved in the biosynthesis of branched-chain amino acids (BCAA). Catalyzes an alkyl-migration followed by a ketol-acid reduction of (S)-2-acetolactate (S2AL) to yield (R)-2,3-dihydroxy-isovalerate. In the isomerase reaction, S2AL is rearranged via a Mg-dependent methyl migration to produce 3-hydroxy-3-methyl-2-ketobutyrate (HMKB). In the reductase reaction, this 2-ketoacid undergoes a metal-dependent reduction by NADPH to yield (R)-2,3-dihydroxy-isovalerate. The chain is Ketol-acid reductoisomerase (NADP(+)) from Campylobacter jejuni (strain RM1221).